We begin with the raw amino-acid sequence, 460 residues long: Glutamyl-tRNA reductase (460 aa).

Substrate-binding positions include 48–51 (TCNR), serine 100, 105–107 (EDQ), and glutamine 111. The active-site Nucleophile is the cysteine 49. 180-185 (GAGEIG) provides a ligand contact to NADP(+).

It belongs to the glutamyl-tRNA reductase family. In terms of assembly, homodimer.

It catalyses the reaction (S)-4-amino-5-oxopentanoate + tRNA(Glu) + NADP(+) = L-glutamyl-tRNA(Glu) + NADPH + H(+). The protein operates within porphyrin-containing compound metabolism; protoporphyrin-IX biosynthesis; 5-aminolevulinate from L-glutamyl-tRNA(Glu): step 1/2. Catalyzes the NADPH-dependent reduction of glutamyl-tRNA(Glu) to glutamate 1-semialdehyde (GSA). This Methanosarcina acetivorans (strain ATCC 35395 / DSM 2834 / JCM 12185 / C2A) protein is Glutamyl-tRNA reductase.